Reading from the N-terminus, the 681-residue chain is Methionine--tRNA ligase (681 aa).

A 'HIGH' region motif is present at residues 14–24 (PYANGSIHLGH). The Zn(2+) site is built by Cys145, Cys148, Cys158, and Cys161. Residues 331–335 (KMSKS) carry the 'KMSKS' region motif. Lys334 serves as a coordination point for ATP. In terms of domain architecture, tRNA-binding spans 579–681 (AFAAVDLRIA…AGAKPGQRVH (103 aa)).

The protein belongs to the class-I aminoacyl-tRNA synthetase family. MetG type 1 subfamily. Homodimer. Zn(2+) serves as cofactor.

It is found in the cytoplasm. It carries out the reaction tRNA(Met) + L-methionine + ATP = L-methionyl-tRNA(Met) + AMP + diphosphate. Its function is as follows. Is required not only for elongation of protein synthesis but also for the initiation of all mRNA translation through initiator tRNA(fMet) aminoacylation. The chain is Methionine--tRNA ligase from Azotobacter vinelandii (strain DJ / ATCC BAA-1303).